The following is a 191-amino-acid chain: GDP-mannose pyrophosphatase (191 aa).

Residues tyrosine 17, 38-40 (KRE), arginine 67, and 85-87 (AGL) contribute to the GDP-alpha-D-mannose site. One can recognise a Nudix hydrolase domain in the interval 43–180 (DRGNGATILL…EIRDGKTVLL (138 aa)). Mg(2+)-binding residues include alanine 85, glutamate 100, and glutamate 104. The Nudix box signature appears at 86-106 (GLLDNDEPEVCIRKEAIEETG). Residues glutamate 104, glutamate 127, 150–151 (DE), and lysine 176 contribute to the GDP-alpha-D-mannose site. Glutamate 151 is a Mg(2+) binding site.

The protein belongs to the Nudix hydrolase family. NudK subfamily. Homodimer. It depends on Mg(2+) as a cofactor.

It catalyses the reaction GDP-alpha-D-mannose + H2O = alpha-D-mannose 1-phosphate + GMP + 2 H(+). In terms of biological role, nucleoside diphosphate sugar hydrolase that hydrolyzes GDP-mannose as its preferred substrate, yielding GMP and mannose-1-phosphate. The sequence is that of GDP-mannose pyrophosphatase (nudK) from Shigella dysenteriae serotype 1 (strain Sd197).